The primary structure comprises 115 residues: Protein Rev (115 aa).

A phosphoserine; by host CK2 mark is found at Ser5 and Ser8. The tract at residues 18 to 26 (LIKFLYQSN) is homomultimerization. Residues 23-48 (YQSNPPPSSEGTRQARRNRRRRWRER) are disordered. The Nuclear localization signal and RNA-binding (RRE) signature appears at 34–50 (TRQARRNRRRRWRERQR). Over residues 36–48 (QARRNRRRRWRER) the composition is skewed to basic residues. The Nuclear export signal and binding to XPO1 motif lies at 73 to 83 (LQLPPQRLTLD). The interval 89–115 (GTSGTQGVGSPQILVESPTVLESGTKE) is disordered. Residues Ser91 and Ser98 each carry the phosphoserine; by host modification.

This sequence belongs to the HIV-1 REV protein family. Homomultimer; when bound to the RRE. Multimeric assembly is essential for activity and may involve XPO1. Binds to human KPNB1, XPO1, TNPO1, RANBP5 and IPO7. Interacts with the viral Integrase. Interacts with human KHDRBS1. Interacts with human NAP1; this interaction decreases Rev multimerization and stimulates its activity. Interacts with human DEAD-box helicases DDX3 and DDX24; these interactions may serve for viral RNA export to the cytoplasm and packaging, respectively. Interacts with human PSIP1; this interaction may inhibit HIV-1 DNA integration by promoting dissociation of the Integrase-LEDGF/p75 complex. Asymmetrically arginine dimethylated at one site by host PRMT6. Methylation impairs the RNA-binding activity and export of viral RNA from the nucleus to the cytoplasm. In terms of processing, phosphorylated by protein kinase CK2. Presence of, and maybe binding to the N-terminus of the regulatory beta subunit of CK2 is necessary for CK2-mediated Rev's phosphorylation.

It is found in the host nucleus. Its subcellular location is the host nucleolus. The protein localises to the host cytoplasm. Its function is as follows. Escorts unspliced or incompletely spliced viral pre-mRNAs (late transcripts) out of the nucleus of infected cells. These pre-mRNAs carry a recognition sequence called Rev responsive element (RRE) located in the env gene, that is not present in fully spliced viral mRNAs (early transcripts). This function is essential since most viral proteins are translated from unspliced or partially spliced pre-mRNAs which cannot exit the nucleus by the pathway used by fully processed cellular mRNAs. Rev itself is translated from a fully spliced mRNA that readily exits the nucleus. Rev's nuclear localization signal (NLS) binds directly to KPNB1/Importin beta-1 without previous binding to KPNA1/Importin alpha-1. KPNB1 binds to the GDP bound form of RAN (Ran-GDP) and targets Rev to the nucleus. In the nucleus, the conversion from Ran-GDP to Ran-GTP dissociates Rev from KPNB1 and allows Rev's binding to the RRE in viral pre-mRNAs. Rev multimerization on the RRE via cooperative assembly exposes its nuclear export signal (NES) to the surface. Rev can then form a complex with XPO1/CRM1 and Ran-GTP, leading to nuclear export of the complex. Conversion from Ran-GTP to Ran-GDP mediates dissociation of the Rev/RRE/XPO1/RAN complex, so that Rev can return to the nucleus for a subsequent round of export. Beside KPNB1, also seems to interact with TNPO1/Transportin-1, RANBP5/IPO5 and IPO7/RANBP7 for nuclear import. The nucleoporin-like HRB/RIP is an essential cofactor that probably indirectly interacts with Rev to release HIV RNAs from the perinuclear region to the cytoplasm. The protein is Protein Rev of Human immunodeficiency virus type 1 group M subtype B (isolate MN) (HIV-1).